The following is a 1992-amino-acid chain: E3 ubiquitin-protein ligase TRIP12 (1992 aa).

The span at 1–10 (MSNRPNNNPG) shows a compositional bias: polar residues. A disordered region spans residues 1–398 (MSNRPNNNPG…SGESESDDSE (398 aa)). Ser2 is modified (N-acetylserine). Ser12 carries the post-translational modification Phosphoserine. The span at 18–27 (RNTAGAQPQD) shows a compositional bias: polar residues. Positions 29–43 (SIGGRSCSSSSVVIV) are enriched in low complexity. Residues 48–70 (DPDRANTSEKQKTGQVPKKDNSR) show a composition bias toward basic and acidic residues. Phosphoserine occurs at positions 77, 85, and 100. Positions 78 to 88 (PDYNRTNSPSS) are enriched in polar residues. The segment covering 154–164 (SSCIKSASVSE) has biased composition (polar residues). Composition is skewed to low complexity over residues 175–188 (PTKLASKSAASAKA) and 196–215 (SSSAASTSSSSSAVASASSA). Residue Lys181 is modified to N6-acetyllysine. A compositionally biased stretch (polar residues) spans 280–290 (PGSSKSETSKP). Phosphoserine occurs at positions 310 and 312. Over residues 330–339 (GSCASASRRG) the composition is skewed to low complexity. The span at 346–358 (GAAEARRQEKMAD) shows a compositional bias: basic and acidic residues. Polar residues predominate over residues 362–371 (NQETVNSSAA). The WWE domain occupies 749 to 836 (MLKKGNAQNT…DPELAKSFIK (88 aa)). The disordered stretch occupies residues 938-1044 (SLLTSPPKAC…QSPKSSFLAS (107 aa)). Phosphoserine is present on Ser942. Residues 948-960 (TNGSGSLGSTPSV) show a composition bias toward polar residues. Over residues 961-973 (NSGTATAATNASA) the composition is skewed to low complexity. Ser991 and Ser997 each carry phosphoserine. The segment covering 1001–1014 (KRKRLPKRGSRRPK) has biased composition (basic residues). Ser1016 carries the phosphoserine modification. The segment covering 1017-1026 (PPRDDDKVDN) has biased composition (basic and acidic residues). Low complexity predominate over residues 1029 to 1040 (KSPTTTQSPKSS). Residues Ser1030, Ser1317, Ser1322, Ser1329, and Ser1376 each carry the phosphoserine modification. Thr1377 is modified (phosphothreonine). 2 disordered regions span residues 1407–1434 (SNKDCVGGKRGRAQTAPTKTSPRNAKKH) and 1568–1587 (TNPEINQSDSQDSRVAPRLD). At Lys1425 the chain carries N6-acetyllysine. The residue at position 1427 (Ser1427) is a Phosphoserine. The interval 1496–1570 (EIIPTSEFIN…AMQRLLDTNP (75 aa)) is K-box. The HECT domain occupies 1885 to 1992 (PDHGYTHDSR…REGQQSFHLS (108 aa)). Cys1959 functions as the Glycyl thioester intermediate in the catalytic mechanism.

The protein belongs to the UPL family. K-HECT subfamily. As to quaternary structure, interacts with MYC; leading to disrupt interaction with isoform p19ARF/ARF of CDKN2A. Interacts with TRADD; leading to disrupt interaction with isoform p19ARF/ARF of CDKN2A. Interacts with SMARCC1; leading to disrupt interaction with SMARCE1.

It localises to the nucleus. It is found in the nucleoplasm. The catalysed reaction is S-ubiquitinyl-[E2 ubiquitin-conjugating enzyme]-L-cysteine + [acceptor protein]-L-lysine = [E2 ubiquitin-conjugating enzyme]-L-cysteine + N(6)-ubiquitinyl-[acceptor protein]-L-lysine.. It participates in protein modification; protein ubiquitination. Functionally, E3 ubiquitin-protein ligase involved in ubiquitin fusion degradation (UFD) pathway and regulation of DNA repair. Part of the ubiquitin fusion degradation (UFD) pathway, a process that mediates ubiquitination of protein at their N-terminus, regardless of the presence of lysine residues in target proteins. Acts as a key regulator of DNA damage response by acting as a suppressor of RNF168, an E3 ubiquitin-protein ligase that promotes accumulation of 'Lys-63'-linked histone H2A and H2AX at DNA damage sites, thereby acting as a guard against excessive spreading of ubiquitinated chromatin at damaged chromosomes. In normal cells, mediates ubiquitination and degradation of isoform p19ARF/ARF of CDKN2A, a lysine-less tumor suppressor required for p53/TP53 activation under oncogenic stress. In cancer cells, however, isoform p19ARF/ARF and TRIP12 are located in different cell compartments, preventing isoform p19ARF/ARF ubiquitination and degradation. Does not mediate ubiquitination of isoform p16-INK4a of CDKN2A. Also catalyzes ubiquitination of NAE1 and SMARCE1, leading to their degradation. Ubiquitination and degradation of target proteins is regulated by interaction with proteins such as MYC, TRADD or SMARCC1, which disrupt the interaction between TRIP12 and target proteins. Mediates ubiquitination of ASXL1: following binding to N(6)-methyladenosine methylated DNA, ASXL1 is ubiquitinated by TRIP12, leading to its degradation and subsequent inactivation of the PR-DUB complex. The polypeptide is E3 ubiquitin-protein ligase TRIP12 (TRIP12) (Bos taurus (Bovine)).